Here is a 219-residue protein sequence, read N- to C-terminus: Octanoyltransferase (219 aa).

The BPL/LPL catalytic domain occupies 32 to 207 (ASSPDQLWIV…TFSHNLGYQN (176 aa)). Substrate contacts are provided by residues 71–78 (RGGQVTYH), 138–140 (SLG), and 151–153 (GLA). The active-site Acyl-thioester intermediate is cysteine 169.

This sequence belongs to the LipB family.

The protein resides in the cytoplasm. The catalysed reaction is octanoyl-[ACP] + L-lysyl-[protein] = N(6)-octanoyl-L-lysyl-[protein] + holo-[ACP] + H(+). The protein operates within protein modification; protein lipoylation via endogenous pathway; protein N(6)-(lipoyl)lysine from octanoyl-[acyl-carrier-protein]: step 1/2. Catalyzes the transfer of endogenously produced octanoic acid from octanoyl-acyl-carrier-protein onto the lipoyl domains of lipoate-dependent enzymes. Lipoyl-ACP can also act as a substrate although octanoyl-ACP is likely to be the physiological substrate. The sequence is that of Octanoyltransferase from Shewanella sediminis (strain HAW-EB3).